The following is a 205-amino-acid chain: Small heat shock protein hspG12 (205 aa).

A sHSP domain is found at 35-205; it reads KTIIDILPPM…YSNTIKININ (171 aa). The interval 99 to 147 is disordered; sequence PSLLDTKEDEASIEEFDEDDIKPKSTETTSTLSNSKENKKDENKSKSTE. Positions 109–118 are enriched in acidic residues; that stretch reads ASIEEFDEDD. Positions 134 to 147 are enriched in basic and acidic residues; sequence KENKKDENKSKSTE.

The protein belongs to the small heat shock protein (HSP20) family.

In Dictyostelium discoideum (Social amoeba), this protein is Small heat shock protein hspG12 (hspG12).